The sequence spans 330 residues: L-lactate dehydrogenase (330 aa).

Residues Val31, Asp52, Lys57, and 96–97 (GA) contribute to the NAD(+) site. Residues Gln99, Arg105, and 137–140 (NPVD) each bind substrate. NAD(+) contacts are provided by residues 135-137 (VSN) and Ser160. 165-168 (DTAR) is a binding site for substrate. Residues Arg170 and His185 each contribute to the beta-D-fructose 1,6-bisphosphate site. His192 functions as the Proton acceptor in the catalytic mechanism. Tyr238 carries the post-translational modification Phosphotyrosine. Position 247 (Thr247) interacts with substrate.

Belongs to the LDH/MDH superfamily. LDH family. Homotetramer.

The protein localises to the cytoplasm. The enzyme catalyses (S)-lactate + NAD(+) = pyruvate + NADH + H(+). It participates in fermentation; pyruvate fermentation to lactate; (S)-lactate from pyruvate: step 1/1. With respect to regulation, allosterically activated by fructose 1,6-bisphosphate (FBP). In terms of biological role, catalyzes the conversion of lactate to pyruvate. In Gloeobacter violaceus (strain ATCC 29082 / PCC 7421), this protein is L-lactate dehydrogenase.